Reading from the N-terminus, the 379-residue chain is 23S rRNA (uracil(747)-C(5))-methyltransferase RlmC (379 aa).

The [4Fe-4S] cluster site is built by C3, C11, C14, and C86. S-adenosyl-L-methionine is bound by residues Q211, F240, E262, and N310. C337 acts as the Nucleophile in catalysis.

Belongs to the class I-like SAM-binding methyltransferase superfamily. RNA M5U methyltransferase family. RlmC subfamily.

It catalyses the reaction uridine(747) in 23S rRNA + S-adenosyl-L-methionine = 5-methyluridine(747) in 23S rRNA + S-adenosyl-L-homocysteine + H(+). Catalyzes the formation of 5-methyl-uridine at position 747 (m5U747) in 23S rRNA. This chain is 23S rRNA (uracil(747)-C(5))-methyltransferase RlmC, found in Halothiobacillus neapolitanus (strain ATCC 23641 / c2) (Thiobacillus neapolitanus).